The primary structure comprises 447 residues: Signal recognition particle 54 kDa protein (447 aa).

GTP is bound by residues 105–112, 187–191, and 247–250; these read GVQGSGKT, DTAGR, and TKMD.

It belongs to the GTP-binding SRP family. SRP54 subfamily. Part of the signal recognition particle protein translocation system, which is composed of SRP and FtsY. Archaeal SRP consists of a 7S RNA molecule of 300 nucleotides and two protein subunits: SRP54 and SRP19.

The protein resides in the cytoplasm. The catalysed reaction is GTP + H2O = GDP + phosphate + H(+). In terms of biological role, involved in targeting and insertion of nascent membrane proteins into the cytoplasmic membrane. Binds to the hydrophobic signal sequence of the ribosome-nascent chain (RNC) as it emerges from the ribosomes. The SRP-RNC complex is then targeted to the cytoplasmic membrane where it interacts with the SRP receptor FtsY. This Hyperthermus butylicus (strain DSM 5456 / JCM 9403 / PLM1-5) protein is Signal recognition particle 54 kDa protein.